Reading from the N-terminus, the 102-residue chain is Vacuolar ATPase assembly integral membrane protein VMA21 (102 aa).

Residues 1 to 30 (MERYDKATLNAAFAPEFRQNEGSLTSTLRT) are Cytoplasmic-facing. The helical transmembrane segment at 31–51 (LLFFTALMITLPVGLYFSSKA) threads the bilayer. Topologically, residues 52–66 (YIFEGTLGMSNRDSY) are lumenal. The chain crosses the membrane as a helical span at residues 67–87 (FYAAIVAVVTVHVVLAMFVYV). Residues 88-102 (AWSEGTRQWREGKQD) lie on the Cytoplasmic side of the membrane.

This sequence belongs to the VMA21 family. As to quaternary structure, associates with the V0 complex of the vacuolar ATPase (V-ATPase). Interacts with ATP6AP2.

Its subcellular location is the endoplasmic reticulum membrane. It is found in the endoplasmic reticulum-Golgi intermediate compartment membrane. The protein localises to the cytoplasmic vesicle. It localises to the COPII-coated vesicle membrane. Its function is as follows. Required for the assembly of the V0 complex of the vacuolar ATPase (V-ATPase) in the endoplasmic reticulum. The polypeptide is Vacuolar ATPase assembly integral membrane protein VMA21 (Gallus gallus (Chicken)).